Here is a 445-residue protein sequence, read N- to C-terminus: Histidine--tRNA ligase (445 aa).

The protein belongs to the class-II aminoacyl-tRNA synthetase family. Homodimer.

It localises to the cytoplasm. The catalysed reaction is tRNA(His) + L-histidine + ATP = L-histidyl-tRNA(His) + AMP + diphosphate + H(+). The protein is Histidine--tRNA ligase of Mycoplasma mobile (strain ATCC 43663 / 163K / NCTC 11711) (Mesomycoplasma mobile).